A 309-amino-acid chain; its full sequence is Homoserine kinase (309 aa).

91 to 101 provides a ligand contact to ATP; the sequence is PIGSGLGSSAC.

It belongs to the GHMP kinase family. Homoserine kinase subfamily.

It is found in the cytoplasm. It catalyses the reaction L-homoserine + ATP = O-phospho-L-homoserine + ADP + H(+). The protein operates within amino-acid biosynthesis; L-threonine biosynthesis; L-threonine from L-aspartate: step 4/5. Catalyzes the ATP-dependent phosphorylation of L-homoserine to L-homoserine phosphate. The polypeptide is Homoserine kinase (Erwinia tasmaniensis (strain DSM 17950 / CFBP 7177 / CIP 109463 / NCPPB 4357 / Et1/99)).